The following is a 421-amino-acid chain: Flap endonuclease 1 (421 aa).

The segment at 1–109 (MGIKGLAKLL…HELIKRREKR (109 aa)) is N-domain. Asp34 contributes to the Mg(2+) binding site. The DNA site is built by Arg47 and Arg75. 5 residues coordinate Mg(2+): Asp91, Glu163, Glu165, Asp184, and Asp186. The tract at residues 127–258 (EQDKQSKRLV…KTALKLIREH (132 aa)) is I-domain. Glu163 contributes to the DNA binding site. The DNA site is built by Gly236 and Asp238. Asp238 provides a ligand contact to Mg(2+). Residues 284–307 (KKLDAQSDDDDEEGVESPSKEENN) form a disordered region. Residues 289 to 298 (QSDDDDEEGV) are compositionally biased toward acidic residues. The interval 379–387 (PQTRMDSFF) is interaction with PCNA. The segment at 398–421 (SAAKRKADAAKAKAAVSKKKTKKH) is disordered.

The protein belongs to the XPG/RAD2 endonuclease family. FEN1 subfamily. Interacts with PCNA. Three molecules of FEN1 bind to one PCNA trimer with each molecule binding to one PCNA monomer. PCNA stimulates the nuclease activity without altering cleavage specificity. The cofactor is Mg(2+). Post-translationally, phosphorylated. Phosphorylation upon DNA damage induces relocalization to the nuclear plasma.

The protein localises to the nucleus. Its subcellular location is the nucleolus. It is found in the nucleoplasm. The protein resides in the mitochondrion. In terms of biological role, structure-specific nuclease with 5'-flap endonuclease and 5'-3' exonuclease activities involved in DNA replication and repair. During DNA replication, cleaves the 5'-overhanging flap structure that is generated by displacement synthesis when DNA polymerase encounters the 5'-end of a downstream Okazaki fragment. It enters the flap from the 5'-end and then tracks to cleave the flap base, leaving a nick for ligation. Also involved in the long patch base excision repair (LP-BER) pathway, by cleaving within the apurinic/apyrimidinic (AP) site-terminated flap. Acts as a genome stabilization factor that prevents flaps from equilibrating into structures that lead to duplications and deletions. Also possesses 5'-3' exonuclease activity on nicked or gapped double-stranded DNA, and exhibits RNase H activity. Also involved in replication and repair of rDNA and in repairing mitochondrial DNA. This is Flap endonuclease 1 from Phaeodactylum tricornutum (strain CCAP 1055/1).